The primary structure comprises 507 residues: Cobyric acid synthase (507 aa).

In terms of domain architecture, GATase cobBQ-type spans 273–468 (RPVIAVIAYP…LHGMFEDPAV (196 aa)). C354 functions as the Nucleophile in the catalytic mechanism. Residue H460 is part of the active site.

It belongs to the CobB/CobQ family. CobQ subfamily.

Its pathway is cofactor biosynthesis; adenosylcobalamin biosynthesis. Its function is as follows. Catalyzes amidations at positions B, D, E, and G on adenosylcobyrinic A,C-diamide. NH(2) groups are provided by glutamine, and one molecule of ATP is hydrogenolyzed for each amidation. This chain is Cobyric acid synthase, found in Polaromonas sp. (strain JS666 / ATCC BAA-500).